A 997-amino-acid polypeptide reads, in one-letter code: Disease resistance protein RML1A (997 aa).

The TIR domain maps to 12-176; it reads WRYRVFTSFH…KIARDVSEKL (165 aa). The active site involves Glu87. In terms of domain architecture, NB-ARC spans 191 to 447; it reads EAHLRKIQSL…HIAIFFNYED (257 aa). LRR repeat units lie at residues 194 to 218, 534 to 557, 600 to 623, 624 to 647, 649 to 670, 671 to 693, 694 to 714, 715 to 737, 758 to 781, and 783 to 808; these read LRKI…GPAG, TSGI…RFLS, AENL…TQLL, TKLK…SNAT, LEML…IKNL, HKLD…NINL, ASLE…PAFS, TKIK…ITHC, PSSL…CIKD, and QRLD…SLRL.

It catalyses the reaction NAD(+) + H2O = ADP-D-ribose + nicotinamide + H(+). TIR-NB-LRR receptor-like protein that confers resistance to the pathogen Leptosphaeria maculans (blackleg disease). This Arabidopsis thaliana (Mouse-ear cress) protein is Disease resistance protein RML1A.